We begin with the raw amino-acid sequence, 476 residues long: Ribulose bisphosphate carboxylase large chain (476 aa).

A propeptide spanning residues 1–2 (MS) is cleaved from the precursor. Pro3 carries the N-acetylproline modification. N6,N6,N6-trimethyllysine is present on Lys14. The substrate site is built by Asn123 and Thr173. Residue Lys175 is the Proton acceptor of the active site. Lys177 serves as a coordination point for substrate. 3 residues coordinate Mg(2+): Lys201, Asp203, and Glu204. Residue Lys201 is modified to N6-carboxylysine. His294 functions as the Proton acceptor in the catalytic mechanism. 3 residues coordinate substrate: Arg295, His327, and Ser379.

Belongs to the RuBisCO large chain family. Type I subfamily. Heterohexadecamer of 8 large chains and 8 small chains; disulfide-linked. The disulfide link is formed within the large subunit homodimers. Mg(2+) is required as a cofactor. The disulfide bond which can form in the large chain dimeric partners within the hexadecamer appears to be associated with oxidative stress and protein turnover.

The protein resides in the plastid. It is found in the chloroplast. It carries out the reaction 2 (2R)-3-phosphoglycerate + 2 H(+) = D-ribulose 1,5-bisphosphate + CO2 + H2O. It catalyses the reaction D-ribulose 1,5-bisphosphate + O2 = 2-phosphoglycolate + (2R)-3-phosphoglycerate + 2 H(+). RuBisCO catalyzes two reactions: the carboxylation of D-ribulose 1,5-bisphosphate, the primary event in carbon dioxide fixation, as well as the oxidative fragmentation of the pentose substrate in the photorespiration process. Both reactions occur simultaneously and in competition at the same active site. The protein is Ribulose bisphosphate carboxylase large chain of Arenaria drummondii (Drummond sandwort).